Here is a 52-residue protein sequence, read N- to C-terminus: Alpha-crystallin B chain (52 aa).

Belongs to the small heat shock protein (HSP20) family. Homodimer. Aggregates with homologous proteins, including alpha-A-crystallin and the small heat shock protein HSPB1, to form large heteromeric complexes.

Functionally, may contribute to the transparency and refractive index of the lens. This Eudromia elegans (Elegant crested-tinamou) protein is Alpha-crystallin B chain (CRYAB).